Consider the following 700-residue polypeptide: Probable E3 ubiquitin ligase complex SCF subunit sconB (700 aa).

Positions 195 to 241 (IDFLTALPPEISFKILCYLDTTSLCKAAQVSRRWRALADDDVVWHRM) constitute an F-box domain. Residues 282-313 (SEQSTEDETGSPAPESASSNAKRKPESDDEDT) are disordered. 7 WD repeats span residues 369–406 (GHTN…ELRT), 409–448 (GHES…STYT), 450–486 (HRGG…TCLL), 488–529 (GHTD…RTFH), 583–626 (ETQS…CLRT), 627–666 (FFGH…CERT), and 669–700 (GHSG…GFQS). The disordered stretch occupies residues 556 to 598 (NDNVSVTSGDSPAASPRGIPGLDAGTSETQSSPFGPAFDNGRP).

This sequence belongs to the WD repeat MET30/SCONB/SCON-2 family. In terms of assembly, component of the SCF(sconB) E3 ubiquitin ligase complex.

It participates in protein modification; protein ubiquitination. Its function is as follows. Component of the SCF(sconB) E3 ubiquitin ligase complex involved in the regulation of sulfur metabolite repression, probably by mediating the inactivation or degradation of the metR transcription factor. The chain is Probable E3 ubiquitin ligase complex SCF subunit sconB (sconB) from Aspergillus clavatus (strain ATCC 1007 / CBS 513.65 / DSM 816 / NCTC 3887 / NRRL 1 / QM 1276 / 107).